The sequence spans 130 residues: Small ribosomal subunit protein uS11c (130 aa).

It belongs to the universal ribosomal protein uS11 family. In terms of assembly, part of the 30S ribosomal subunit.

It localises to the plastid. The protein localises to the chloroplast. This is Small ribosomal subunit protein uS11c from Pinus koraiensis (Korean pine).